A 174-amino-acid chain; its full sequence is MKLHDLKPALGAHRKRKRIGRGIGSGKGKTGGKGMMGQKARSGPNPSPSFEGGQMRITRKMPKLRGFKNRWRIEYQIINTGQLNNVPDGTELTINAMIEQGWVQPAKPVKILGDGELERKLTIHAHKFSASARARIEAAGGAAIETPWIVERRSRSRGPNPPRHHRKAEATPGA.

2 disordered regions span residues 1–56 (MKLH…GQMR) and 150–174 (VERRSRSRGPNPPRHHRKAEATPGA). Residues 21-35 (RGIGSGKGKTGGKGM) show a composition bias toward gly residues.

This sequence belongs to the universal ribosomal protein uL15 family. In terms of assembly, part of the 50S ribosomal subunit.

In terms of biological role, binds to the 23S rRNA. The sequence is that of Large ribosomal subunit protein uL15 from Roseiflexus castenholzii (strain DSM 13941 / HLO8).